The chain runs to 696 residues: L-amino-acid oxidase (696 aa).

A propeptide spanning residues 1 to 130 (MKWSAAAGAA…IKMRRDLKAR (130 aa)) is cleaved from the precursor. Residues glutamate 207, arginine 215, 236–237 (MR), and valine 440 each bind FAD. Arginine 237 contacts substrate. Position 564 (tyrosine 564) interacts with substrate. Residues glutamate 649 and 658 to 661 (IASA) contribute to the FAD site.

This sequence belongs to the flavin monoamine oxidase family. Requires FAD as cofactor.

The enzyme catalyses an L-alpha-amino acid + O2 + H2O = a 2-oxocarboxylate + H2O2 + NH4(+). The sequence is that of L-amino-acid oxidase (lox) from Neurospora crassa (strain ATCC 24698 / 74-OR23-1A / CBS 708.71 / DSM 1257 / FGSC 987).